The sequence spans 133 residues: Large ribosomal subunit protein uL16c (133 aa).

It belongs to the universal ribosomal protein uL16 family. Part of the 50S ribosomal subunit.

The protein resides in the plastid. The protein localises to the chloroplast. The polypeptide is Large ribosomal subunit protein uL16c (Liriodendron tulipifera (Tuliptree)).